Consider the following 471-residue polypeptide: MVDWTEKYRPASLSEVRGNDTARDALAEWAETWPDHREAVVVHGSPGIGKTSAAHALANDAGWDVVELNASDQRTADVVERVAGEAARSGTLTGGSGGRKLVLLDEADNLHGNIDRGGSAAITRLVDDAPQPIVLVANEYYEMSSSLRSACREIEFRDVSKRSIVPVLRDVCRREDVTYEEDALAAIAEQNAGDLRSAVNDLQALAEQDRTLTADDVVMGERDRTEGVFDYLDDVIATHSAREALQAAYDVDETPDDLLSWVADNVPKDYRGGELADAYEFLSNADVWLGRVRATQNYAYWRYATDNVAAGVAAARRHDHGGWTRYGPPSYWRKLGSSRATREKRDYVARHIAETAGCSMATARNDVLPFLRVLTHHCKNRELTVAMAAAYELDTEHVAFVTGSGETTNKVASIVADAEERRTDAAVDHSEGAFAGAVREDNTDEDSAADETTDGDEDTGADSQRGLDEFF.

44 to 51 is an ATP binding site; that stretch reads GSPGIGKT. Over residues 422–431 the composition is skewed to basic and acidic residues; the sequence is RTDAAVDHSE. A disordered region spans residues 422–471; sequence RTDAAVDHSEGAFAGAVREDNTDEDSAADETTDGDEDTGADSQRGLDEFF. Positions 442–460 are enriched in acidic residues; that stretch reads NTDEDSAADETTDGDEDTG.

Belongs to the activator 1 small subunits family. RfcL subfamily. As to quaternary structure, heteromultimer composed of small subunits (RfcS) and large subunits (RfcL).

Its function is as follows. Part of the RFC clamp loader complex which loads the PCNA sliding clamp onto DNA. In Halobacterium salinarum (strain ATCC 29341 / DSM 671 / R1), this protein is Replication factor C large subunit.